The chain runs to 283 residues: Protein boule-like (283 aa).

The tract at residues 1 to 25 is disordered; the sequence is MQTDSLSPSPNPVSPVPLNNPTSAP. Residues 33–110 enclose the RRM domain; the sequence is NRIFVGGIDF…KKLNIGPAIR (78 aa). Residues 160-184 form the DAZ domain; it reads PSRSVCSSPVMVAQPIYQQPAYHYQ.

This sequence belongs to the RRM DAZ family. Interacts with DAZ1 and DAZL.

The protein resides in the cytoplasm. In terms of biological role, probable RNA-binding protein, which may be required during spermatogenesis. May act by binding to the 3'-UTR of mRNAs and regulating their translation. This chain is Protein boule-like (BOLL), found in Macaca fascicularis (Crab-eating macaque).